The chain runs to 293 residues: Acetylglutamate kinase (293 aa).

Substrate-binding positions include 67-68 (GG), R89, and N190.

It belongs to the acetylglutamate kinase family. ArgB subfamily.

The protein resides in the cytoplasm. The catalysed reaction is N-acetyl-L-glutamate + ATP = N-acetyl-L-glutamyl 5-phosphate + ADP. The protein operates within amino-acid biosynthesis; L-arginine biosynthesis; N(2)-acetyl-L-ornithine from L-glutamate: step 2/4. Catalyzes the ATP-dependent phosphorylation of N-acetyl-L-glutamate. This Nitrosospira multiformis (strain ATCC 25196 / NCIMB 11849 / C 71) protein is Acetylglutamate kinase.